We begin with the raw amino-acid sequence, 240 residues long: Small ribosomal subunit protein uS2 (240 aa).

Belongs to the universal ribosomal protein uS2 family.

In Haemophilus influenzae (strain 86-028NP), this protein is Small ribosomal subunit protein uS2.